The chain runs to 24 residues: Ascaphin-2 (24 aa).

Expressed by the skin glands.

Its subcellular location is the secreted. In terms of biological role, antimicrobial peptide that shows higher potency against Gram-negative bacteria than against Gram-positive bacteria. Has a very week hemolytic activity. This chain is Ascaphin-2, found in Ascaphus truei (Coastal tailed frog).